A 300-amino-acid chain; its full sequence is Probable membrane transporter protein YtnM (300 aa).

The next 8 membrane-spanning stretches (helical) occupy residues 4–24, 33–53, 76–96, 102–122, 139–159, 206–226, 231–251, and 260–280; these read LIVFAFIGLLSQLIDGSLGMA, LLAFGITPAVASASVHLAEVV, LVIPGSIGAFLGAAFLSQLPG, YISLFLLLLGGYVLIRFLFQY, IPLGVIAGFADATGGGGWGPV, LWVFSLMAGGIIAAPIAAWLV, PQLMGVLVGGFIILVNARTLI, and VHPLIYTAIGAIWLSAVLFVL.

It belongs to the 4-toluene sulfonate uptake permease (TSUP) (TC 2.A.102) family.

The protein localises to the cell membrane. This chain is Probable membrane transporter protein YtnM (ytnM), found in Bacillus subtilis (strain 168).